We begin with the raw amino-acid sequence, 130 residues long: ER membrane protein complex subunit 5 (130 aa).

The Cytoplasmic portion of the chain corresponds to 1 to 3; the sequence is MAS. A helical membrane pass occupies residues 4–22; that stretch reads SFWKGVVGIGLFALAHAAF. Residues 23 to 43 lie on the Lumenal side of the membrane; the sequence is SAAQHRSYMRLTEKENETLPI. Residues 44–63 traverse the membrane as a helical segment; it reads DIVLQTLLSFVITCYGIVHI. At 64 to 130 the chain is on the cytoplasmic side; that stretch reads SGEFKDMDAS…LRLRKLENFH (67 aa).

Belongs to the membrane magnesium transporter (TC 1.A.67) family. As to quaternary structure, component of the ER membrane protein complex (EMC).

It is found in the endoplasmic reticulum membrane. The protein resides in the golgi apparatus membrane. It localises to the early endosome membrane. Its function is as follows. Part of the endoplasmic reticulum membrane protein complex (EMC) that enables the energy-independent insertion into endoplasmic reticulum membranes of newly synthesized membrane proteins. Preferentially accommodates proteins with transmembrane domains that are weakly hydrophobic or contain destabilizing features such as charged and aromatic residues. Involved in the cotranslational insertion of multi-pass membrane proteins in which stop-transfer membrane-anchor sequences become ER membrane spanning helices. It is also required for the post-translational insertion of tail-anchored/TA proteins in endoplasmic reticulum membranes. By mediating the proper cotranslational insertion of N-terminal transmembrane domains in an N-exo topology, with translocated N-terminus in the lumen of the ER, controls the topology of multi-pass membrane proteins like the G protein-coupled receptors. By regulating the insertion of various proteins in membranes, it is indirectly involved in many cellular processes. May be involved in Mg(2+) transport. The polypeptide is ER membrane protein complex subunit 5 (Danio rerio (Zebrafish)).